A 226-amino-acid chain; its full sequence is DNA mismatch repair protein MutH (226 aa).

It belongs to the MutH family.

The protein resides in the cytoplasm. Its function is as follows. Sequence-specific endonuclease that cleaves unmethylated GATC sequences. It is involved in DNA mismatch repair. The polypeptide is DNA mismatch repair protein MutH (Actinobacillus pleuropneumoniae serotype 3 (strain JL03)).